A 273-amino-acid chain; its full sequence is Translation initiation factor 2 subunit alpha (273 aa).

The S1 motif domain maps to 12–83 (GEFVVATVKN…EKGHIDLSLK (72 aa)).

It belongs to the eIF-2-alpha family. In terms of assembly, heterotrimer composed of an alpha, a beta and a gamma chain.

In terms of biological role, eIF-2 functions in the early steps of protein synthesis by forming a ternary complex with GTP and initiator tRNA. This is Translation initiation factor 2 subunit alpha from Thermococcus gammatolerans (strain DSM 15229 / JCM 11827 / EJ3).